The sequence spans 360 residues: Phosphoserine aminotransferase (360 aa).

Arginine 42 provides a ligand contact to L-glutamate. Residues tryptophan 102, threonine 152, aspartate 171, and glutamine 194 each coordinate pyridoxal 5'-phosphate. Position 195 is an N6-(pyridoxal phosphate)lysine (lysine 195). 237-238 serves as a coordination point for pyridoxal 5'-phosphate; sequence NT.

Belongs to the class-V pyridoxal-phosphate-dependent aminotransferase family. SerC subfamily. Homodimer. The cofactor is pyridoxal 5'-phosphate.

Its subcellular location is the cytoplasm. It catalyses the reaction O-phospho-L-serine + 2-oxoglutarate = 3-phosphooxypyruvate + L-glutamate. The catalysed reaction is 4-(phosphooxy)-L-threonine + 2-oxoglutarate = (R)-3-hydroxy-2-oxo-4-phosphooxybutanoate + L-glutamate. It functions in the pathway amino-acid biosynthesis; L-serine biosynthesis; L-serine from 3-phospho-D-glycerate: step 2/3. It participates in cofactor biosynthesis; pyridoxine 5'-phosphate biosynthesis; pyridoxine 5'-phosphate from D-erythrose 4-phosphate: step 3/5. In terms of biological role, catalyzes the reversible conversion of 3-phosphohydroxypyruvate to phosphoserine and of 3-hydroxy-2-oxo-4-phosphonooxybutanoate to phosphohydroxythreonine. In Coxiella burnetii (strain CbuK_Q154) (Coxiella burnetii (strain Q154)), this protein is Phosphoserine aminotransferase.